We begin with the raw amino-acid sequence, 308 residues long: Putative hydrolase MT0526 (308 aa).

The interval 1-48 (MMVSSHLGSPDQAGHVDLASPADPPPPDASASHSPVDMPAPVAAAGSD) is disordered. The active-site Nucleophile is the aspartate 62. Aspartate 62, aspartate 64, and aspartate 237 together coordinate Mg(2+). Aspartate 64 serves as the catalytic Proton donor.

This sequence belongs to the HAD-like hydrolase superfamily. SerB family. The cofactor is Mg(2+).

In Mycobacterium tuberculosis (strain CDC 1551 / Oshkosh), this protein is Putative hydrolase MT0526.